The chain runs to 209 residues: Phosphoheptose isomerase (209 aa).

Positions 50–209 (IADTFREGGK…ELVEKMMGYD (160 aa)) constitute an SIS domain. Residue 65–67 (NGG) participates in substrate binding. 2 residues coordinate Zn(2+): His-74 and Glu-78. Residues Glu-78, 109–110 (ND), 135–137 (STS), Ser-140, and Gln-188 each bind substrate. 2 residues coordinate Zn(2+): Gln-188 and His-196.

It belongs to the SIS family. GmhA subfamily. Zn(2+) serves as cofactor.

It localises to the cytoplasm. The enzyme catalyses 2 D-sedoheptulose 7-phosphate = D-glycero-alpha-D-manno-heptose 7-phosphate + D-glycero-beta-D-manno-heptose 7-phosphate. Its pathway is carbohydrate biosynthesis; D-glycero-D-manno-heptose 7-phosphate biosynthesis; D-glycero-alpha-D-manno-heptose 7-phosphate and D-glycero-beta-D-manno-heptose 7-phosphate from sedoheptulose 7-phosphate: step 1/1. Functionally, catalyzes the isomerization of sedoheptulose 7-phosphate in D-glycero-D-manno-heptose 7-phosphate. This Chlorobaculum tepidum (strain ATCC 49652 / DSM 12025 / NBRC 103806 / TLS) (Chlorobium tepidum) protein is Phosphoheptose isomerase.